Reading from the N-terminus, the 421-residue chain is Signal recognition particle receptor FtsY (421 aa).

A compositionally biased stretch (basic residues) spans 1 to 10; that stretch reads MFSFFRRKKK. A disordered region spans residues 1 to 22; the sequence is MFSFFRRKKKQETPAPEEAQIQ. GTP-binding positions include 228-235, 309-313, and 373-376; these read GINGAGKT, DTAGR, and TKLD.

The protein belongs to the GTP-binding SRP family. FtsY subfamily. In terms of assembly, part of the signal recognition particle protein translocation system, which is composed of SRP and FtsY. SRP is a ribonucleoprotein composed of Ffh and a 4.5S RNA molecule.

The protein resides in the cell membrane. The protein localises to the cytoplasm. The enzyme catalyses GTP + H2O = GDP + phosphate + H(+). Functionally, involved in targeting and insertion of nascent membrane proteins into the cytoplasmic membrane. Acts as a receptor for the complex formed by the signal recognition particle (SRP) and the ribosome-nascent chain (RNC). Interaction with SRP-RNC leads to the transfer of the RNC complex to the Sec translocase for insertion into the membrane, the hydrolysis of GTP by both Ffh and FtsY, and the dissociation of the SRP-FtsY complex into the individual components. In Neisseria meningitidis serogroup C, this protein is Signal recognition particle receptor FtsY.